Consider the following 185-residue polypeptide: Translocon-associated protein subunit gamma (185 aa).

Met1 is subject to N-acetylmethionine. Over 1 to 27 (MAPKGGSKQQSEEDLLLQDFSRNLSAK) the chain is Lumenal. Phosphoserine occurs at positions 7 and 11. A helical membrane pass occupies residues 28–48 (SSALFFGNAFIVSAIPIWLYW). Over 49–54 (RIWHMD) the chain is Cytoplasmic. Residues 55 to 76 (LIQSAVLYSVMTLVSTYLVAFA) form a helical membrane-spanning segment. Residues 77 to 135 (YKNVKFVLKHKVAQKREDAVSKEVTRKLSEADNRKMSRKEKDERILWKKNEVADYEATT) lie on the Lumenal side of the membrane. Ser105 carries the phosphoserine modification. A helical transmembrane segment spans residues 136 to 157 (FSIFYNNTLFLVLVIVASFFIL). At 158–163 (KNFNPT) the chain is on the cytoplasmic side. The chain crosses the membrane as a helical span at residues 164-184 (VNYILSISASSGLIALLSTGS).

Belongs to the TRAP-gamma family. Heterotetramer of TRAP-alpha, TRAP-beta, TRAP-delta and TRAP-gamma.

The protein resides in the endoplasmic reticulum membrane. In terms of biological role, TRAP proteins are part of a complex whose function is to bind calcium to the ER membrane and thereby regulate the retention of ER resident proteins. The polypeptide is Translocon-associated protein subunit gamma (Ssr3) (Mus musculus (Mouse)).